The chain runs to 181 residues: ATP-dependent protease subunit HslV (181 aa).

Thr8 is a catalytic residue. Residues Gly165, Cys168, and Thr171 each contribute to the Na(+) site.

The protein belongs to the peptidase T1B family. HslV subfamily. In terms of assembly, a double ring-shaped homohexamer of HslV is capped on each side by a ring-shaped HslU homohexamer. The assembly of the HslU/HslV complex is dependent on binding of ATP.

The protein localises to the cytoplasm. It carries out the reaction ATP-dependent cleavage of peptide bonds with broad specificity.. Allosterically activated by HslU binding. Functionally, protease subunit of a proteasome-like degradation complex believed to be a general protein degrading machinery. This is ATP-dependent protease subunit HslV from Oceanobacillus iheyensis (strain DSM 14371 / CIP 107618 / JCM 11309 / KCTC 3954 / HTE831).